A 375-amino-acid polypeptide reads, in one-letter code: DNA replication and repair protein RecF (375 aa).

An ATP-binding site is contributed by 34–41 (GDNGAGKT).

Belongs to the RecF family.

It is found in the cytoplasm. The RecF protein is involved in DNA metabolism; it is required for DNA replication and normal SOS inducibility. RecF binds preferentially to single-stranded, linear DNA. It also seems to bind ATP. The protein is DNA replication and repair protein RecF of Rhizobium rhizogenes (strain K84 / ATCC BAA-868) (Agrobacterium radiobacter).